Consider the following 550-residue polypeptide: Chaperonin GroEL (550 aa).

ATP-binding positions include 30–33 (TLGP), Lys51, 87–91 (DGTTT), Gly415, 479–481 (NAA), and Asp495.

It belongs to the chaperonin (HSP60) family. Forms a cylinder of 14 subunits composed of two heptameric rings stacked back-to-back. Interacts with the co-chaperonin GroES.

It localises to the cytoplasm. The enzyme catalyses ATP + H2O + a folded polypeptide = ADP + phosphate + an unfolded polypeptide.. Together with its co-chaperonin GroES, plays an essential role in assisting protein folding. The GroEL-GroES system forms a nano-cage that allows encapsulation of the non-native substrate proteins and provides a physical environment optimized to promote and accelerate protein folding. This is Chaperonin GroEL from Polynucleobacter asymbioticus (strain DSM 18221 / CIP 109841 / QLW-P1DMWA-1) (Polynucleobacter necessarius subsp. asymbioticus).